A 689-amino-acid chain; its full sequence is Homoaconitase, mitochondrial (689 aa).

The N-terminal 17 residues, 1-17, are a transit peptide targeting the mitochondrion; sequence MVVLRRSFHVYTRLQRG. The [4Fe-4S] cluster site is built by Cys336, Cys403, and Cys406.

This sequence belongs to the aconitase/IPM isomerase family. The cofactor is [4Fe-4S] cluster.

It is found in the mitochondrion. The catalysed reaction is (2R,3S)-homoisocitrate = cis-homoaconitate + H2O. It functions in the pathway amino-acid biosynthesis; L-lysine biosynthesis via AAA pathway; L-alpha-aminoadipate from 2-oxoglutarate: step 3/5. Catalyzes the reversible hydration of cis-homoaconitate to (2R,3S)-homoisocitrate, a step in the alpha-aminoadipate pathway for lysine biosynthesis. The chain is Homoaconitase, mitochondrial (LYS4) from Candida glabrata (strain ATCC 2001 / BCRC 20586 / JCM 3761 / NBRC 0622 / NRRL Y-65 / CBS 138) (Yeast).